The chain runs to 1063 residues: Probable hemoglobin and hemoglobin-haptoglobin-binding protein 1 (1063 aa).

Positions 1-24 (MTNFKFSLLACSIAFALNASIAYA) are cleaved as a signal peptide. 7 repeat units span residues 26–29 (QPTN), 30–33 (QPTN), 34–37 (QPTN), 38–41 (QPTN), 42–45 (QPTN), 46–49 (QPTN), and 50–53 (QPTN). Positions 26-53 (QPTNQPTNQPTNQPTNQPTNQPTNQPTN) are 7 X 4 AA tandem repeats of Q-P-T-N. The span at 28-55 (TNQPTNQPTNQPTNQPTNQPTNQPTNQN) shows a compositional bias: low complexity. The segment at 28–57 (TNQPTNQPTNQPTNQPTNQPTNQPTNQNSN) is disordered. The TonB box signature appears at 63–70 (EQINVSGS). Residues 66–200 (NVSGSSENIN…LGGSVIFETK (135 aa)) enclose the TBDR plug domain. Positions 208-1063 (DKDYYLSYKR…NYRMSVQFEF (856 aa)) constitute a TBDR beta-barrel domain. The short motif at 1046–1063 (NRFYAPGRNYRMSVQFEF) is the TonB C-terminal box element.

Belongs to the TonB-dependent receptor family. Hemoglobin/haptoglobin binding protein subfamily.

The protein localises to the cell outer membrane. Its function is as follows. Acts as a receptor for hemoglobin or the hemoglobin/haptoglobin complex of the human host and is required for heme uptake. This chain is Probable hemoglobin and hemoglobin-haptoglobin-binding protein 1, found in Haemophilus influenzae (strain ATCC 51907 / DSM 11121 / KW20 / Rd).